Here is a 530-residue protein sequence, read N- to C-terminus: MFS transporter PfmaC (530 aa).

Residues threonine 41–phenylalanine 76 form a disordered region. The segment covering threonine 42 to glycine 56 has biased composition (polar residues). Positions alanine 59–glycine 69 are enriched in low complexity. Transmembrane regions (helical) follow at residues tyrosine 165–tyrosine 182, phenylalanine 195–tryptophan 215, alanine 226–leucine 246, tryptophan 261–phenylalanine 281, isoleucine 324–valine 344, asparagine 369–serine 389, glycine 396–tryptophan 416, leucine 422–glycine 442, alanine 456–leucine 476, and proline 493–leucine 513.

This sequence belongs to the major facilitator superfamily. Allantoate permease family.

It localises to the cell membrane. Functionally, MFS transporter; part of the gene cluster that mediates the biosynthesis of dihydroxynaphthalene (DHN)-melanin, a bluish-green pigment forming a dark layer in the conidial wall that protects the conidia from UV radiations. The protein is MFS transporter PfmaC of Pestalotiopsis fici (strain W106-1 / CGMCC3.15140).